A 396-amino-acid polypeptide reads, in one-letter code: Tyrosine--tRNA ligase (396 aa).

Positions 43–52 (PTAPDIHLGH) match the 'HIGH' region motif. Residues 227 to 231 (KMSKS) carry the 'KMSKS' region motif. ATP is bound at residue K230. The 61-residue stretch at 335–395 (IGLATLLKEA…GKRKFARVTV (61 aa)) folds into the S4 RNA-binding domain.

This sequence belongs to the class-I aminoacyl-tRNA synthetase family. TyrS type 2 subfamily. As to quaternary structure, homodimer.

The protein resides in the cytoplasm. It carries out the reaction tRNA(Tyr) + L-tyrosine + ATP = L-tyrosyl-tRNA(Tyr) + AMP + diphosphate + H(+). Functionally, catalyzes the attachment of tyrosine to tRNA(Tyr) in a two-step reaction: tyrosine is first activated by ATP to form Tyr-AMP and then transferred to the acceptor end of tRNA(Tyr). In Haemophilus ducreyi (strain 35000HP / ATCC 700724), this protein is Tyrosine--tRNA ligase.